The following is a 117-amino-acid chain: uncharacterized protein (117 aa).

The signal sequence occupies residues 1-22; the sequence is MHVKYLAGIVGAALLMAGCSSS.

This is an uncharacterized protein from Escherichia coli O6:H1 (strain CFT073 / ATCC 700928 / UPEC).